A 248-amino-acid chain; its full sequence is Ubiquinone biosynthesis O-methyltransferase (248 aa).

Positions 41, 72, 93, and 136 each coordinate S-adenosyl-L-methionine.

It belongs to the methyltransferase superfamily. UbiG/COQ3 family.

The catalysed reaction is a 3-demethylubiquinol + S-adenosyl-L-methionine = a ubiquinol + S-adenosyl-L-homocysteine + H(+). The enzyme catalyses a 3-(all-trans-polyprenyl)benzene-1,2-diol + S-adenosyl-L-methionine = a 2-methoxy-6-(all-trans-polyprenyl)phenol + S-adenosyl-L-homocysteine + H(+). It functions in the pathway cofactor biosynthesis; ubiquinone biosynthesis. In terms of biological role, O-methyltransferase that catalyzes the 2 O-methylation steps in the ubiquinone biosynthetic pathway. This is Ubiquinone biosynthesis O-methyltransferase from Sinorhizobium fredii (strain NBRC 101917 / NGR234).